The chain runs to 346 residues: Glucose-6-phosphatase 3 (346 aa).

Topologically, residues 1 to 24 are lumenal; it reads MESTLGAGIVIAEALQNQLAWLEN. Residues 25–45 traverse the membrane as a helical segment; it reads VWLWITFLGDPKILFLFYFPA. Over 46 to 54 the chain is Cytoplasmic; sequence AYYASRRVG. A helical membrane pass occupies residues 55–75; sequence IAVLWISLITEWLNLIFKWFL. Topologically, residues 76-114 are lumenal; it reads FGDRPFWWVHESGYYSQAPAQVHQFPSSCETGPGSPSGH. Position 79 (Arg-79) interacts with substrate. His-114 (proton donor) is an active-site residue. The helical transmembrane segment at 115–135 threads the bilayer; sequence CMITGAALWPIMTALSSQVAT. Residues 136-146 lie on the Cytoplasmic side of the membrane; the sequence is RARSRWVRVMP. The chain crosses the membrane as a helical span at residues 147–164; sequence SLAYCTFLLAVGLSRIFI. Arg-161 provides a ligand contact to substrate. Residues 165–169 are Lumenal-facing; sequence LAHFP. Catalysis depends on His-167, which acts as the Nucleophile. Residues 170-186 form a helical membrane-spanning segment; sequence HQVLAGLITGAVLGWLM. At 187–197 the chain is on the cytoplasmic side; sequence TPRVPMERELS. A helical transmembrane segment spans residues 198 to 218; the sequence is FYGLTALALMLGTSLIYWTLF. Topologically, residues 219–254 are lumenal; the sequence is TLGLDLSWSISLAFKWCERPEWIHVDSRPFASLSRD. The helical transmembrane segment at 255–273 threads the bilayer; it reads SGAALGLGIALHSPCYAQV. The Cytoplasmic segment spans residues 274 to 283; that stretch reads RRAQLGNGQK. Residues 284–304 form a helical membrane-spanning segment; sequence IACLVLAMGLLGPLDWLGHPP. Residues 305-307 lie on the Lumenal side of the membrane; sequence QIS. A helical membrane pass occupies residues 308-328; the sequence is LFYIFNFLKYTLWPCLVLALV. At 329 to 346 the chain is on the cytoplasmic side; sequence PWAVHMFSAQEAPPIHSS.

The protein belongs to the glucose-6-phosphatase family. In terms of tissue distribution, ubiquitously expressed. Highly expressed in skeletal muscle, at intermediate levels in heart, brain, placenta, kidney, colon, thymus, spleen and pancreas. Also detected in testis, prostate, ovary, liver, lung, small intestine and peripheral blood lymphocytes.

It localises to the endoplasmic reticulum membrane. The catalysed reaction is D-glucose 6-phosphate + H2O = D-glucose + phosphate. The protein operates within carbohydrate biosynthesis; gluconeogenesis. Inhibited by vanadate. Its function is as follows. Hydrolyzes glucose-6-phosphate to glucose in the endoplasmic reticulum. May form with the glucose-6-phosphate transporter (SLC37A4/G6PT) a ubiquitously expressed complex responsible for glucose production through glycogenolysis and gluconeogenesis. Probably required for normal neutrophil function. This Homo sapiens (Human) protein is Glucose-6-phosphatase 3 (G6PC3).